The chain runs to 706 residues: Glycine--tRNA ligase beta subunit (706 aa).

The protein belongs to the class-II aminoacyl-tRNA synthetase family. Tetramer of two alpha and two beta subunits.

The protein localises to the cytoplasm. It catalyses the reaction tRNA(Gly) + glycine + ATP = glycyl-tRNA(Gly) + AMP + diphosphate. The protein is Glycine--tRNA ligase beta subunit of Hyphomonas neptunium (strain ATCC 15444).